The sequence spans 585 residues: ATP-dependent lipid A-core flippase (585 aa).

Transmembrane regions (helical) follow at residues 16-36, 66-86, 156-176, 252-272, and 278-298; these read LWPY…ALII, FLSM…ASGF, IIGL…ILLV, AIAN…VLVL, and LRAE…FGLM. The region spanning 29-313 is the ABC transmembrane type-1 domain; that stretch reads VAVVALIINA…LTNVTSQFQR (285 aa). The ABC transporter domain occupies 345 to 581; the sequence is IQVKNVTFTY…DGAYAQLHRI (237 aa). An ATP-binding site is contributed by 379-386; that stretch reads GRSGSGKS.

This sequence belongs to the ABC transporter superfamily. Lipid exporter (TC 3.A.1.106) family. In terms of assembly, homodimer.

Its subcellular location is the cell inner membrane. It catalyses the reaction ATP + H2O + lipid A-core oligosaccharideSide 1 = ADP + phosphate + lipid A-core oligosaccharideSide 2.. Its function is as follows. Involved in lipopolysaccharide (LPS) biosynthesis. Translocates lipid A-core from the inner to the outer leaflet of the inner membrane. Transmembrane domains (TMD) form a pore in the inner membrane and the ATP-binding domain (NBD) is responsible for energy generation. This is ATP-dependent lipid A-core flippase from Photobacterium profundum (strain SS9).